The primary structure comprises 192 residues: Ion-translocating oxidoreductase complex subunit B (192 aa).

A hydrophobic region spans residues 1–26 (MNAIWIAVAAVSLLALAFGAILGYAS). One can recognise a 4Fe-4S domain in the interval 32–91 (EDDPVVEKIDEILPQSQCGQCGYPGCRPYAEAISCNGEKINRCAPGGEAVMLKIAELLNV). 12 residues coordinate [4Fe-4S] cluster: C49, C52, C57, C74, C117, C120, C123, C127, C147, C150, C153, and C157. 2 4Fe-4S ferredoxin-type domains span residues 108-137 (MVAV…GATR) and 138-167 (AMHT…LQPV).

This sequence belongs to the 4Fe4S bacterial-type ferredoxin family. RnfB subfamily. As to quaternary structure, the complex is composed of six subunits: RsxA, RsxB, RsxC, RsxD, RsxE and RsxG. [4Fe-4S] cluster is required as a cofactor.

It localises to the cell inner membrane. Its function is as follows. Part of a membrane-bound complex that couples electron transfer with translocation of ions across the membrane. Required to maintain the reduced state of SoxR. This Escherichia coli O81 (strain ED1a) protein is Ion-translocating oxidoreductase complex subunit B.